Consider the following 445-residue polypeptide: Maltoporin (445 aa).

The N-terminal stretch at 1-25 (MKMKAKWLPIAAGVTAALASQAAFA) is a signal peptide.

This sequence belongs to the porin LamB (TC 1.B.3) family. Homotrimer formed of three 18-stranded antiparallel beta-barrels, containing three independent channels.

It is found in the cell outer membrane. It carries out the reaction beta-maltose(in) = beta-maltose(out). Involved in the transport of maltose and maltodextrins. This chain is Maltoporin, found in Aeromonas salmonicida.